Reading from the N-terminus, the 61-residue chain is Protein translocase subunit SecE (61 aa).

Residues 38–58 form a helical membrane-spanning segment; the sequence is GIGMILIGLIGLVIRMIGYLI.

Belongs to the SecE/SEC61-gamma family. As to quaternary structure, component of the Sec protein translocase complex. Heterotrimer consisting of SecY (alpha), SecG (beta) and SecE (gamma) subunits. The heterotrimers can form oligomers, although 1 heterotrimer is thought to be able to translocate proteins. Interacts with the ribosome. May interact with SecDF, and other proteins may be involved.

The protein localises to the cell membrane. Functionally, essential subunit of the Sec protein translocation channel SecYEG. Clamps together the 2 halves of SecY. May contact the channel plug during translocation. This is Protein translocase subunit SecE from Thermococcus onnurineus (strain NA1).